A 148-amino-acid chain; its full sequence is Small ribosomal subunit protein bS6 (148 aa).

The segment at 96-148 is disordered; the sequence is HEEGQSAMLTRRDDRRERDGDDRPRRREGGFDRGDRGDRGPRRPRDNEAGEGA.

Belongs to the bacterial ribosomal protein bS6 family.

In terms of biological role, binds together with bS18 to 16S ribosomal RNA. The protein is Small ribosomal subunit protein bS6 of Brucella melitensis biotype 1 (strain ATCC 23456 / CCUG 17765 / NCTC 10094 / 16M).